The primary structure comprises 278 residues: MDVRQSIHSAHAKTLDTQQLRNEFLVEKVFVADEYTMVYSHIDRIIVGGIMPVAKTVSVGGEVGKQLGVSYFLERRELGVINIGGPGTITVDGQCFEIGHRDALYVGKGAQEVVFASVESSKPAKFYYNCAPAHMTYPTKKVTPADVSPVTLGDNLTSNRRTINKYFVPDVLETCQLSMGLTELDPGNLWNTMPCHTHERRMEVYFYFNMDEDACVFHMMGQPQETRHLVMHNEQAVISPSWSIHSGVGTKAYTFIWGMVGENQVFDDMDHVAVKDLR.

Zn(2+) is bound by residues His196, His198, Glu203, and His245.

The protein belongs to the KduI family. Zn(2+) serves as cofactor.

It carries out the reaction 5-dehydro-4-deoxy-D-glucuronate = 3-deoxy-D-glycero-2,5-hexodiulosonate. Its pathway is glycan metabolism; pectin degradation; 2-dehydro-3-deoxy-D-gluconate from pectin: step 4/5. Its function is as follows. Catalyzes the isomerization of 5-dehydro-4-deoxy-D-glucuronate to 3-deoxy-D-glycero-2,5-hexodiulosonate. The sequence is that of 4-deoxy-L-threo-5-hexosulose-uronate ketol-isomerase from Enterobacter sp. (strain 638).